Reading from the N-terminus, the 316-residue chain is MAEAGKHTTVLLQEAVEALALKPDGIYVDGTFGRGGHSRLILERLGKNGRLIAFDRDPVACAVGRSFGDERFCMVHSSYSRLQEVLRQLNIGQIDGVLLDLGVSSPQLEEATRGFSFSMEGPLDMRMDTTEGQTAAQWLASASEVQLEEVIKEYGEERFAKQIARAIVKARARQPLVTTSQLAAIVAAAIPARAREPKQNPATRTFQAIRIYLNQELERLSLALPQCVEMLKTGGRLVVISFHSLEDRIVKRFIREGANTDKLPKHLPLRADEVRRFSRASLQMVGKAVRPGVAEVECNPRARSAVMRVAERINTT.

S-adenosyl-L-methionine-binding positions include 35-37 (GGH), Asp55, Tyr79, Asp100, and Gln107.

It belongs to the methyltransferase superfamily. RsmH family.

Its subcellular location is the cytoplasm. It carries out the reaction cytidine(1402) in 16S rRNA + S-adenosyl-L-methionine = N(4)-methylcytidine(1402) in 16S rRNA + S-adenosyl-L-homocysteine + H(+). Its function is as follows. Specifically methylates the N4 position of cytidine in position 1402 (C1402) of 16S rRNA. In Nitrosospira multiformis (strain ATCC 25196 / NCIMB 11849 / C 71), this protein is Ribosomal RNA small subunit methyltransferase H.